A 494-amino-acid polypeptide reads, in one-letter code: Glycerol kinase (494 aa).

Threonine 12 serves as a coordination point for ADP. Residues threonine 12, threonine 13, and serine 14 each contribute to the ATP site. Threonine 12 serves as a coordination point for sn-glycerol 3-phosphate. Arginine 16 serves as a coordination point for ADP. Positions 82, 83, 134, and 244 each coordinate sn-glycerol 3-phosphate. 5 residues coordinate glycerol: arginine 82, glutamate 83, tyrosine 134, aspartate 244, and glutamine 245. The ADP site is built by threonine 266 and glycine 309. Positions 266, 309, 313, and 410 each coordinate ATP. Residues glycine 410 and asparagine 414 each coordinate ADP.

Belongs to the FGGY kinase family. In terms of assembly, homotetramer and homodimer (in equilibrium).

The catalysed reaction is glycerol + ATP = sn-glycerol 3-phosphate + ADP + H(+). The protein operates within polyol metabolism; glycerol degradation via glycerol kinase pathway; sn-glycerol 3-phosphate from glycerol: step 1/1. Activated by phosphorylation and inhibited by fructose 1,6-bisphosphate (FBP). Key enzyme in the regulation of glycerol uptake and metabolism. Catalyzes the phosphorylation of glycerol to yield sn-glycerol 3-phosphate. The chain is Glycerol kinase from Desulfitobacterium hafniense (strain DSM 10664 / DCB-2).